Here is a 249-residue protein sequence, read N- to C-terminus: MKKLVLLRHGESIWNQENRFTGWTDVDLTPKGLKEAEEAGRLLRENGFSFDIAYTSLLKRAIRTLWIALDEMDQMWTPIELNWRLNERHYGALQGLNKAETAKQYGDEQVLVWRRSYDIRPPSITINDERYPGFDLRYRNMSSGDIPLAESLKDTVARFLPYWNQSIAPQIKAEKKVIIAAHGNSLRALIKHLDNISDQDILNCNIPTGIPLVYELDDDLKPLNSYYLGDAGQIGEAISAVANQGKSGA.

Substrate-binding positions include 8-15 (RHGESIWN), 21-22 (TG), Arg-60, 87-90 (ERHY), Lys-98, 114-115 (RR), and 183-184 (GN). The active-site Tele-phosphohistidine intermediate is His-9. Catalysis depends on Glu-87, which acts as the Proton donor/acceptor.

Belongs to the phosphoglycerate mutase family. BPG-dependent PGAM subfamily. In terms of assembly, homodimer.

It catalyses the reaction (2R)-2-phosphoglycerate = (2R)-3-phosphoglycerate. It functions in the pathway carbohydrate degradation; glycolysis; pyruvate from D-glyceraldehyde 3-phosphate: step 3/5. Catalyzes the interconversion of 2-phosphoglycerate and 3-phosphoglycerate. The protein is 2,3-bisphosphoglycerate-dependent phosphoglycerate mutase 2 of Nitrosomonas europaea (strain ATCC 19718 / CIP 103999 / KCTC 2705 / NBRC 14298).